We begin with the raw amino-acid sequence, 261 residues long: Homeobox protein engrailed-2b (261 aa).

Composition is skewed to basic and acidic residues over residues 1–21, 53–72, and 100–116; these read MEEN…DESN, GRRK…RENR, and KKTD…RAET. Disordered regions lie at residues 1–24, 53–125, and 152–176; these read MEEN…NRAI, GRRK…SSDS, and DRPS…KRPR. A DNA-binding region (homeobox) is located at residues 172 to 231; that stretch reads DKRPRTAFTAEQLQRLKNEFQNNRYLTEQRRQALAQELGLNESQIKIWFQNKRAKIKKAT.

Belongs to the engrailed homeobox family.

The protein localises to the nucleus. The protein is Homeobox protein engrailed-2b (eng2b) of Danio rerio (Zebrafish).